Reading from the N-terminus, the 164-residue chain is UPF0303 protein RHE_CH02903 (164 aa).

It belongs to the UPF0303 family.

The protein is UPF0303 protein RHE_CH02903 of Rhizobium etli (strain ATCC 51251 / DSM 11541 / JCM 21823 / NBRC 15573 / CFN 42).